We begin with the raw amino-acid sequence, 359 residues long: Src kinase-associated phosphoprotein 2 (359 aa).

Phosphoserine is present on residues Ser-5, Ser-6, and Ser-9. The interval 14-64 (PEEIRNLLADVETFVADILKGENLSKKAKEKRESLIKKIKDVKSIYLQEFQ) is homodimerization. The disordered stretch occupies residues 66–88 (KGDAEDGEEYDDPFAGPPDTISL). Tyr-75 carries the post-translational modification Phosphotyrosine. Residues Ser-87 and Ser-90 each carry the phosphoserine modification. A PH domain is found at 116 to 219 (FVLKAGYLEK…WVQQLKFVLQ (104 aa)). A phosphotyrosine mark is found at Tyr-151 and Tyr-197. A Phosphoserine modification is found at Ser-223. Tyr-261 carries the post-translational modification Phosphotyrosine. The interval 264–293 (LPEEEEDSAPVKVEEQRKMSQDSVHHTSGD) is disordered. Over residues 275–293 (KVEEQRKMSQDSVHHTSGD) the composition is skewed to basic and acidic residues. Phosphoserine occurs at positions 283 and 286. The SH3 domain occupies 297 to 358 (DYANFYQGLW…PKAYIMEMYD (62 aa)).

It belongs to the SKAP family. Homodimer. Interacts with PTPNS1. Part of a complex consisting of SKAP2, FYB1 and PTPNS1. Part of a complex consisting of SKAP2, FYB1 and LILRB3. May interact with actin. Interacts with FYB1, which is required for SKAP2 protein stability. Interacts with LAT, GRB2, PTK2B and PRAM1. May interact with FYN, HCK and LYN. Interacts with FASLG. Phosphorylated in resting platelets. Phosphorylated by FYN on Tyr-261 upon T-cell activation. Dephosphorylated on Tyr-75 by PTPN22. As to expression, ubiquitously expressed. Present in platelets (at protein level).

It localises to the cytoplasm. In terms of biological role, may be involved in B-cell and macrophage adhesion processes. In B-cells, may act by coupling the B-cell receptor (BCR) to integrin activation. May play a role in src signaling pathway. This chain is Src kinase-associated phosphoprotein 2 (SKAP2), found in Homo sapiens (Human).